Reading from the N-terminus, the 501-residue chain is Glycerol kinase (501 aa).

Thr14 serves as a coordination point for ADP. Residues Thr14, Thr15, and Ser16 each coordinate ATP. Position 14 (Thr14) interacts with sn-glycerol 3-phosphate. ADP is bound at residue Arg18. The sn-glycerol 3-phosphate site is built by Arg84, Glu85, and Tyr136. Residues Arg84, Glu85, and Tyr136 each coordinate glycerol. His231 is subject to Phosphohistidine; by HPr. Sn-glycerol 3-phosphate is bound at residue Asp245. Residues Asp245 and Gln246 each contribute to the glycerol site. Residues Thr267 and Gly310 each coordinate ADP. 4 residues coordinate ATP: Thr267, Gly310, Gln314, and Gly411. Residues Gly411 and Asn415 each coordinate ADP.

This sequence belongs to the FGGY kinase family. Homotetramer and homodimer (in equilibrium). In terms of processing, the phosphoenolpyruvate-dependent sugar phosphotransferase system (PTS), including enzyme I, and histidine-containing protein (HPr) are required for the phosphorylation of His-231, which leads to the activation of the enzyme.

It catalyses the reaction glycerol + ATP = sn-glycerol 3-phosphate + ADP + H(+). Its pathway is polyol metabolism; glycerol degradation via glycerol kinase pathway; sn-glycerol 3-phosphate from glycerol: step 1/1. Its activity is regulated as follows. Activated by phosphorylation and inhibited by fructose 1,6-bisphosphate (FBP). Key enzyme in the regulation of glycerol uptake and metabolism. Catalyzes the phosphorylation of glycerol to yield sn-glycerol 3-phosphate. This Enterococcus faecalis (strain ATCC 700802 / V583) protein is Glycerol kinase.